The following is a 264-amino-acid chain: Thymidylate synthase (264 aa).

Arginine 21 contacts dUMP. Histidine 51 is a (6R)-5,10-methylene-5,6,7,8-tetrahydrofolate binding site. Position 126 to 127 (126 to 127) interacts with dUMP; the sequence is RR. Cysteine 146 functions as the Nucleophile in the catalytic mechanism. DUMP is bound by residues 166–169, asparagine 177, and 207–209; these read RSCD and HLY. Aspartate 169 is a binding site for (6R)-5,10-methylene-5,6,7,8-tetrahydrofolate. Position 263 (alanine 263) interacts with (6R)-5,10-methylene-5,6,7,8-tetrahydrofolate.

This sequence belongs to the thymidylate synthase family. Bacterial-type ThyA subfamily. In terms of assembly, homodimer.

It is found in the cytoplasm. It catalyses the reaction dUMP + (6R)-5,10-methylene-5,6,7,8-tetrahydrofolate = 7,8-dihydrofolate + dTMP. Its pathway is pyrimidine metabolism; dTTP biosynthesis. Catalyzes the reductive methylation of 2'-deoxyuridine-5'-monophosphate (dUMP) to 2'-deoxythymidine-5'-monophosphate (dTMP) while utilizing 5,10-methylenetetrahydrofolate (mTHF) as the methyl donor and reductant in the reaction, yielding dihydrofolate (DHF) as a by-product. This enzymatic reaction provides an intracellular de novo source of dTMP, an essential precursor for DNA biosynthesis. In Serratia proteamaculans (strain 568), this protein is Thymidylate synthase.